A 258-amino-acid chain; its full sequence is Thyroxine 5-deiodinase (258 aa).

A helical; Signal-anchor for type II membrane protein transmembrane segment spans residues 1-20; that stretch reads AACILLFPRFLLTAVMLWLL. The Extracellular portion of the chain corresponds to 21–258; sequence DFLCIRKKML…QSPGAVVIQV (238 aa). Residue selenocysteine 122 is part of the active site. Position 122 (selenocysteine 122) is a non-standard amino acid, selenocysteine.

The protein belongs to the iodothyronine deiodinase family. As to quaternary structure, monomer. Homodimer. May undergo minor heretodimerization with DIO1 and DIO2.

It is found in the cell membrane. Its subcellular location is the endosome membrane. It carries out the reaction 3,3',5'-triiodo-L-thyronine + iodide + A + H(+) = L-thyroxine + AH2. The catalysed reaction is 3,3'-diiodo-L-thyronine + iodide + A + H(+) = 3,3',5-triiodo-L-thyronine + AH2. The enzyme catalyses 3-iodo-L-thyronine + iodide + A + H(+) = 3,5-diiodo-L-thyronine + AH2. It catalyses the reaction L-thyronine + iodide + A + H(+) = 3-iodo-L-thyronine + AH2. It carries out the reaction 3',5'-diiodo-L-thyronine + iodide + A + H(+) = 3,3',5'-triiodo-L-thyronine + AH2. The catalysed reaction is 3'-iodo-L-thyronine + iodide + A + H(+) = 3,3'-diiodo-L-thyronine + AH2. The enzyme catalyses 3,3',5'-triiodothyronamine + iodide + A + H(+) = 3,3',5,5'-tetraiodothyronamine + AH2. It catalyses the reaction 3',5'-diiodothyronamine + iodide + A + H(+) = 3,3',5'-triiodothyronamine + AH2. It carries out the reaction 3,3'-diiodothyronamine + iodide + A + H(+) = 3,3',5-triiodothyronamine + AH2. The catalysed reaction is 3-iodothyronamine + iodide + A + H(+) = 3,5-diiodothyronamine + AH2. The enzyme catalyses 3'-iodothyronamine + iodide + A + H(+) = 3,3'-diiodothyronamine + AH2. It catalyses the reaction thyronamine + iodide + A + H(+) = 3-iodothyronamine + AH2. Plays a crucial role in the metabolism of thyroid hormones (TH) and has specific roles in TH activation and inactivation by deiodination. Catalyzes the deiodination of L-thyroxine (T4) to 3,3',5'-triiodothyronine (rT3) and 3,5,3'-triiodothyronine (T3) to 3,3'-diiodothyronine (3,3'-T2) via inner-ring deiodination (IRD). Catalyzes the deiodination of rT3 to 3',5'-diiodothyronine (3',5'-T2), 3,3'-T2 to 3'-monoiodothyronine (3'-T1) and 3,5-diiodothyronine (3,5-T2) to 3-monoiodothyronine (3-T1) via IRD. Catalyzes the deiodination of 3-T1 to L-thyronine (T0) via outer-ring deiodination (ORD). Catalyzes the tyrosyl ring deiodinations of 3,3',5,5'-tetraiodothyronamine, 3,3',5'-triiodothyronamine, 3,5,3'-triiodothyronamine, 3,5-diiodothyronamine, 3,3'-diiodothyronamine and 3-iodothyronamine. The sequence is that of Thyroxine 5-deiodinase (DIO3) from Gallus gallus (Chicken).